Consider the following 513-residue polypeptide: Cytochrome P450 4p1 (513 aa).

Heme-binding residues include Glu320 and Cys459.

Belongs to the cytochrome P450 family. Heme is required as a cofactor.

The protein localises to the endoplasmic reticulum membrane. Its subcellular location is the microsome membrane. In terms of biological role, may be involved in the metabolism of insect hormones and in the breakdown of synthetic insecticides. The sequence is that of Cytochrome P450 4p1 (Cyp4p1) from Drosophila melanogaster (Fruit fly).